Here is a 282-residue protein sequence, read N- to C-terminus: Cholesterol 25-hydroxylase-like protein 1, member 1 (282 aa).

N3 carries an N-linked (GlcNAc...) asparagine glycan. 3 helical membrane-spanning segments follow: residues 40-60 (FFPVLLAFSSYIIFSVPFAVL), 85-107 (MLRTLWTAVYNHLVFVLPAVLIT), and 127-147 (FSGGLGALLVFDTQYFLWHMV). The region spanning 133–265 (ALLVFDTQYF…FSHWDKIFGT (133 aa)) is the Fatty acid hydroxylase domain. The Histidine box-1 signature appears at 144–148 (WHMVH). Positions 159–163 (HAIHH) match the Histidine box-2 motif. The Histidine box-3 motif lies at 240–246 (AHDMHHQ).

Belongs to the sterol desaturase family. The cofactor is Fe cation.

It is found in the endoplasmic reticulum membrane. In terms of biological role, may catalyze the formation of 25-hydroxycholesterol from cholesterol. The chain is Cholesterol 25-hydroxylase-like protein 1, member 1 (ch25hl1.1) from Danio rerio (Zebrafish).